Reading from the N-terminus, the 139-residue chain is ATP synthase epsilon chain (139 aa).

Belongs to the ATPase epsilon chain family. F-type ATPases have 2 components, CF(1) - the catalytic core - and CF(0) - the membrane proton channel. CF(1) has five subunits: alpha(3), beta(3), gamma(1), delta(1), epsilon(1). CF(0) has three main subunits: a, b and c.

Its subcellular location is the cell membrane. In terms of biological role, produces ATP from ADP in the presence of a proton gradient across the membrane. In Enterococcus faecalis (strain ATCC 700802 / V583), this protein is ATP synthase epsilon chain.